The primary structure comprises 444 residues: Transcriptional regulatory protein GlrR (444 aa).

One can recognise a Response regulatory domain in the interval 7-121; that stretch reads HLLLVDDDPG…ALYQAIDDAL (115 aa). Residue D56 is modified to 4-aspartylphosphate. In terms of domain architecture, Sigma-54 factor interaction spans 136 to 366; the sequence is IVTRSPLMLR…VNVIEQCVAL (231 aa). ATP-binding positions include 164–171 and 227–236; these read GQSGTGKE and AEGGTLFLDE. A DNA-binding region (H-T-H motif) is located at residues 414 to 433; that stretch reads VTHAARMAGRNRTEFYKLLS.

Post-translationally, phosphorylated by GlrK.

Its subcellular location is the cytoplasm. In terms of biological role, member of the two-component regulatory system GlrR/GlrK that up-regulates transcription of the glmY sRNA when cells enter the stationary growth phase. Regulates glmY transcription by binding to three conserved sites in the purL-glmY intergenic region. In Escherichia coli (strain K12), this protein is Transcriptional regulatory protein GlrR (glrR).